Here is a 340-residue protein sequence, read N- to C-terminus: Adenosine kinase (340 aa).

Aspartate 292 is an active-site residue.

The protein belongs to the carbohydrate kinase PfkB family. The cofactor is Mg(2+).

The catalysed reaction is adenosine + ATP = AMP + ADP + H(+). Its pathway is purine metabolism; AMP biosynthesis via salvage pathway; AMP from adenosine: step 1/1. This chain is Adenosine kinase (ado1), found in Schizosaccharomyces pombe (strain 972 / ATCC 24843) (Fission yeast).